The primary structure comprises 255 residues: Menaquinol:cytochrome c reductase cytochrome c subunit (255 aa).

Transmembrane regions (helical) follow at residues 46-62 (WMVGAVFLIGFLVLTIV), 104-124 (VVGAMIMPGLAFGALLLAPFL), and 137-157 (VAVGMMLLAISAAVFLTWQSV). The Cytochrome c domain occupies 178–253 (DTNAEGYKVF…ELAKFISETT (76 aa)). Heme c contacts are provided by cysteine 192, cysteine 195, and histidine 196.

It belongs to the cytochrome b family. The main subunits of the menaquinol:cytochrome c complex are a Rieske-type iron-sulfur protein (QcrA), a cytochrome b (QcrB) and a cytochrome c (QcrC). The cofactor is heme c.

Its subcellular location is the cell membrane. Its function is as follows. Component of the menaquinol:cytochrome c reductase complex. The protein is Menaquinol:cytochrome c reductase cytochrome c subunit (qcrC) of Bacillus subtilis (strain 168).